Here is a 714-residue protein sequence, read N- to C-terminus: FERM domain-containing protein 7 (714 aa).

Residues 2–282 enclose the FERM domain; the sequence is LHLKVQFLDD…EYHAFFRLSE (281 aa). Residues 537–558 adopt a coiled-coil conformation; the sequence is NIRMKSFQQDLQVLQEAIARTS.

In terms of tissue distribution, expressed in liver, kidney, pancreas and at low levels in brain and heart. Expressed in embryonic brain and developing neural retina.

The protein localises to the cell projection. Its subcellular location is the neuron projection. It localises to the growth cone. Plays a role in neurite development, may be through the activation of the GTPase RAC1. Plays a role in the control of eye movement and gaze stability. The protein is FERM domain-containing protein 7 (FRMD7) of Homo sapiens (Human).